A 110-amino-acid chain; its full sequence is PHD finger-like domain-containing protein 5A (110 aa).

N-acetylalanine is present on Ala-2. Lys-3 carries the N6-acetyllysine modification. 11 residues coordinate Zn(2+): Cys-11, Cys-23, Cys-26, Cys-30, Cys-33, Cys-46, Cys-49, Cys-58, Cys-61, Cys-72, and Cys-75. Positions 35–51 are interaction with SF3B1 and SF3B3; sequence SYVRPCTLVRICDECNY. The segment at 79–82 is interaction with SF3B3; it reads EKDR. Residue Cys-85 participates in Zn(2+) binding. A Phosphoserine modification is found at Ser-94.

It belongs to the PHF5 family. As to quaternary structure, component of the 17S U2 SnRNP complex, a ribonucleoprotein complex that contains small nuclear RNA (snRNA) U2 and a number of specific proteins. Part of the SF3B subcomplex of the 17S U2 SnRNP complex. SF3B associates with the splicing subcomplex SF3A and a 12S RNA unit to form the U2 small nuclear ribonucleoproteins complex (U2 snRNP). Within the SF3B complex interacts directly with SF3B1 and SF3B3. Component of the minor spliceosome, which splices U12-type introns. Within this complex, interacts with CRIPT. Interacts (via N-terminus) with U2AF1 and SRSF5; acts to bridge the two. Interacts (via C-terminus) with EP400 and DDX1; acts to bridge the two. Interacts with the PAF1 complex (PAF1C) composed of CDC73, PAF1, LEO1, CTR9, RTF1 and SKIC8. Within the PAF1C interacts directly with CDC73 and SKIC8. Interacts with RNA polymerase II. As to expression, expressed in primary spermatocytes (at protein level). Ubiquitously expressed in pre- and postnatal tissues. Highly expressed in pluripotent embryonic stem cells (ESCs) (at protein level) and induced pluripotent stem cells (iPSCs).

It is found in the nucleus. It localises to the nucleus speckle. Functionally, component of the 17S U2 SnRNP complex of the spliceosome, a large ribonucleoprotein complex that removes introns from transcribed pre-mRNAs. The 17S U2 SnRNP complex (1) directly participates in early spliceosome assembly and (2) mediates recognition of the intron branch site during pre-mRNA splicing by promoting the selection of the pre-mRNA branch-site adenosine, the nucleophile for the first step of splicing. Within the 17S U2 SnRNP complex, PHF5A is part of the SF3B subcomplex, which is required for 'A' complex assembly formed by the stable binding of U2 snRNP to the branchpoint sequence in pre-mRNA. Sequence independent binding of SF3A and SF3B subcomplexes upstream of the branch site is essential, it may anchor U2 snRNP to the pre-mRNA. Also acts as a component of the minor spliceosome, which is involved in the splicing of U12-type introns in pre-mRNAs. Also involved in elongation by RNA polymerase II as part of the PAF1 complex (PAF1C). PAF1C is required for maintenance of embryonic stem cell (ESC) self-renewal and cellular reprogramming of stem cells. Maintains pluripotency by recruiting and stabilizing PAF1C on pluripotency genes loci, and by regulating the expression of the pluripotency genes. Regulates the deposition of elongation-associated histone modifications, including dimethylated histone H3 'Lys-79' (H3K79me2) and trimethylated histone H3 'Lys-36' (H3K36me3), on PAF1C targets, self-renewal and pluripotency genes. Regulates RNA polymerase II promoter-proximal pause release of the PAF1C targets and self-renewal genes, and the levels of elongating ('Ser-2' phosphorylated) RNA polymerase II in their gene bodies. Regulates muscle specification in adult stem cells by stabilizing PAF1C in chromatin to promote myogenic differentiation. Acts as a transcriptional regulator by binding to the GJA1/Cx43 promoter and enhancing its up-regulation by ESR1/ER-alpha. The sequence is that of PHD finger-like domain-containing protein 5A (Phf5a) from Mus musculus (Mouse).